Consider the following 97-residue polypeptide: NADH-ubiquinone oxidoreductase chain 4L (97 aa).

3 helical membrane passes run 1–21, 25–45, and 57–77; these read MSYL…IILN, LIIM…LLLF, and IFAI…LAIM.

The protein belongs to the complex I subunit 4L family.

Its subcellular location is the mitochondrion membrane. It catalyses the reaction a ubiquinone + NADH + 5 H(+)(in) = a ubiquinol + NAD(+) + 4 H(+)(out). Core subunit of the mitochondrial membrane respiratory chain NADH dehydrogenase (Complex I) that is believed to belong to the minimal assembly required for catalysis. Complex I functions in the transfer of electrons from NADH to the respiratory chain. The immediate electron acceptor for the enzyme is believed to be ubiquinone. In Sarcophyton glaucum (Toadstool umbrella leather coral), this protein is NADH-ubiquinone oxidoreductase chain 4L (ND4L).